Consider the following 642-residue polypeptide: Uromodulin (642 aa).

The signal sequence occupies residues 1–26; sequence MGQLSSLTSVWMVVVVTSWVIIAANI. Positions 32–64 constitute an EGF-like 1 domain; that stretch reads RSCSECHSNATCMEDGMVTTCSCLVGFTGSGFE. 21 cysteine pairs are disulfide-bonded: cysteine 34–cysteine 43, cysteine 37–cysteine 52, cysteine 54–cysteine 65, cysteine 71–cysteine 85, cysteine 79–cysteine 94, cysteine 96–cysteine 108, cysteine 114–cysteine 128, cysteine 122–cysteine 137, cysteine 139–cysteine 150, cysteine 152–cysteine 163, cysteine 157–cysteine 172, cysteine 176–cysteine 269, cysteine 197–cysteine 284, cysteine 219–cysteine 257, cysteine 225–cysteine 289, cysteine 250–cysteine 258, cysteine 299–cysteine 308, cysteine 302–cysteine 317, cysteine 319–cysteine 348, cysteine 336–cysteine 426, and cysteine 367–cysteine 390. Residue asparagine 40 is glycosylated (N-linked (GlcNAc...) asparagine). Residues 67-109 form the EGF-like 2; calcium-binding domain; the sequence is DLDECAIPGAHNCSEGSSCMNTLGSYLCTCPDGFRLTPGLGCI. A glycan (N-linked (GlcNAc...) asparagine) is linked at asparagine 78. The EGF-like 3; calcium-binding domain occupies 110 to 151; the sequence is DVDECSEPGLSRCHALATCINNKGNYSCVCPAGYRGDGQHCE. N-linked (GlcNAc...) asparagine glycosylation is present at asparagine 134. Positions 152 to 173 are beta hairpin; the sequence is CSPGSCGPGLDCVPVGDALVCA. The tract at residues 174–293 is D10C; the sequence is DPCQEHRILD…CYLAYCTDPT (120 aa). Asparagine 234 and asparagine 246 each carry an N-linked (GlcNAc...) asparagine glycan. N-linked (GlcNAc...) asparagine glycosylation occurs at asparagine 277. The EGF-like 4 domain occupies 294-325; the sequence is SVLGTCEECSVEEDCKSHDGMWSCQCKQDFNV. An N-linked (GlcNAc...) asparagine glycan is attached at asparagine 324. The interval 335-430 is ZP-N; the sequence is ECRPNDIKVS…KINFECSYPL (96 aa). Residues 335–590 enclose the ZP domain; it reads ECRPNDIKVS…PTCSGTRFRS (256 aa). N-linked (GlcNAc...) asparagine glycosylation is found at asparagine 397 and asparagine 448. The interval 431–454 is flexible ZP-N/ZP-C linker; important for secretion and polymerization into filaments; sequence DMKVSLETSLQPIVSSLNISVGGT. The tract at residues 455–465 is internal hydrophobic patch (IHP); the sequence is GMFTVRMALFQ. The tract at residues 455–590 is ZP-C; it reads GMFTVRMALF…PTCSGTRFRS (136 aa). 3 disulfides stabilise this stretch: cysteine 507-cysteine 567, cysteine 528-cysteine 583, and cysteine 572-cysteine 579. Asparagine 514 carries N-linked (GlcNAc...) asparagine glycosylation. Residues 587–590 are essential for cleavage by HPN; that stretch reads RFRS. Residues 599–607 form an external hydrophobic patch (EHP); regulates polymerization into filaments region; it reads VLNLGPITR. The GPI-anchor amidated serine moiety is linked to residue serine 620. Positions 621–642 are cleaved as a propeptide — removed in mature form; sequence SLGFLKVCLPLLLSATLTLMFQ.

Homodimer that then polymerizes into long filaments. The filaments can additionally assemble laterally to form a sheet. The filaments consist of a zigzag-shaped backbone with laterally protruding arms which interact with bacterial adhesin fimH. Two fimH molecules can bind to a single UMOD monomer. N-glycosylated. In terms of processing, proteolytically cleaved at a conserved C-terminal proteolytic cleavage site to generate the secreted form found in urine. This cleavage is catalyzed by HPN. As to expression, detected in kidney and pancreas.

It localises to the apical cell membrane. It is found in the basolateral cell membrane. The protein resides in the cell projection. The protein localises to the cilium membrane. Its subcellular location is the secreted. In terms of biological role, functions in biogenesis and organization of the apical membrane of epithelial cells of the thick ascending limb of Henle's loop (TALH), where it promotes formation of complex filamentous gel-like structure that may play a role in the water barrier permeability. May serve as a receptor for binding and endocytosis of cytokines (IL-1, IL-2) and TNF. Facilitates neutrophil migration across renal epithelia. Functionally, in the urine, may contribute to colloid osmotic pressure, retards passage of positively charged electrolytes, and inhibits formation of liquid containing supersaturated salts and subsequent formation of salt crystals. Protects against urinary tract infections by binding to type 1 fimbriated E.coli. Binds to bacterial adhesin fimH which mediates the stable formation of bacterial aggregates, prevents the binding of E.coli to uroplakins UPK1A and UPK1B which act as urothelial receptors for type I fimbriae, and allows for pathogen clearance through micturation. Also promotes aggregation of other bacteria including K.pneumoniae, P.aeruginosa and S.mitis and so may also protect against other uropathogens. The protein is Uromodulin (UMOD) of Canis lupus familiaris (Dog).